The sequence spans 177 residues: MDLPAPIHDILLVSLGSGLIVGGLGVVLLTNPIYSAFSLGLVLVCISLFYIPSNSYFVAAAQLLIYVGAINVLILFAVMFMNGSEYYNYFHFWTVGDGFTSLVCTSIFFSLIATIPNTSWYGIIWTTRSNQIIEQDLTSNVQQIGIHLSTDFYLPFELISIILLVSLVGAIAMARRE.

Helical transmembrane passes span 10–30, 32–52, 61–81, 92–112, and 152–172; these read ILLV…VLLT, PIYS…FYIP, AQLL…VMFM, FWTV…FSLI, and FYLP…GAIA.

The protein belongs to the complex I subunit 6 family. NDH is composed of at least 16 different subunits, 5 of which are encoded in the nucleus.

It is found in the plastid. The protein localises to the chloroplast thylakoid membrane. It carries out the reaction a plastoquinone + NADH + (n+1) H(+)(in) = a plastoquinol + NAD(+) + n H(+)(out). The enzyme catalyses a plastoquinone + NADPH + (n+1) H(+)(in) = a plastoquinol + NADP(+) + n H(+)(out). Functionally, NDH shuttles electrons from NAD(P)H:plastoquinone, via FMN and iron-sulfur (Fe-S) centers, to quinones in the photosynthetic chain and possibly in a chloroplast respiratory chain. The immediate electron acceptor for the enzyme in this species is believed to be plastoquinone. Couples the redox reaction to proton translocation, and thus conserves the redox energy in a proton gradient. The chain is NAD(P)H-quinone oxidoreductase subunit 6, chloroplastic (ndhG) from Nymphaea alba (White water-lily).